Here is a 208-residue protein sequence, read N- to C-terminus: Glutathione S-transferase 1 (208 aa).

The GST N-terminal domain maps to 1 to 80; that stretch reads MDFYYLPGSA…YLVEKYGKTD (80 aa). Glutathione is bound by residues serine 9, 50 to 52, and 64 to 66; these read HTI and ESR. The GST C-terminal domain maps to 86-207; it reads CPKKRAVINQ…AGCLEFKKYF (122 aa).

It belongs to the GST superfamily. Theta family. Homodimer.

The catalysed reaction is RX + glutathione = an S-substituted glutathione + a halide anion + H(+). In terms of biological role, conjugation of reduced glutathione to a wide number of exogenous and endogenous hydrophobic electrophiles. The polypeptide is Glutathione S-transferase 1 (Gst1) (Musca domestica (House fly)).